The sequence spans 428 residues: MSEITDVYAREILDSRGNPTLEVEVFLESGVMGRAAVPSGASTGEREALELRDGDASRYLGKGVLKAVDNVNDIIAEQLIGMEATDQVGIDRRMLELDGTEYKSTLGANAILGVSLAVAKAAAEEVGLPLYQYIGGCNARELPLPMMNILNGGAHADNNVDIQEFMIMPAGARSFSEALRMGAEVFHALKSVLKGKGYNTAVGDEGGFAPNLKSNEEALEVIMEAIAKAGYKAGEDILLALDVASSELFKDGKYFLENEAKPEKTADELIDFYENLVNKYPIISIEDGMAENDWEGWKKITDRLGKRVQLVGDDLFVTNTKILKEGISKGVANSILIKLNQIGTLTETLDAIETAKRAGYTTVISHRSGETEDTTLADLAVAVNAGQIKTGSLCRTDRVAKYNQLLRIEDELDVTAQFRGKDVFYNLR.

Residue Gln163 coordinates (2R)-2-phosphoglycerate. Glu205 (proton donor) is an active-site residue. Mg(2+) contacts are provided by Asp242, Glu286, and Asp313. (2R)-2-phosphoglycerate-binding residues include Lys338, Arg367, Ser368, and Lys389. Lys338 serves as the catalytic Proton acceptor.

This sequence belongs to the enolase family. Requires Mg(2+) as cofactor.

The protein localises to the cytoplasm. The protein resides in the secreted. Its subcellular location is the cell surface. The enzyme catalyses (2R)-2-phosphoglycerate = phosphoenolpyruvate + H2O. It participates in carbohydrate degradation; glycolysis; pyruvate from D-glyceraldehyde 3-phosphate: step 4/5. In terms of biological role, catalyzes the reversible conversion of 2-phosphoglycerate (2-PG) into phosphoenolpyruvate (PEP). It is essential for the degradation of carbohydrates via glycolysis. The protein is Enolase of Geobacter sulfurreducens (strain ATCC 51573 / DSM 12127 / PCA).